The sequence spans 99 residues: Small ribosomal subunit protein eS24 (99 aa).

It belongs to the eukaryotic ribosomal protein eS24 family.

The polypeptide is Small ribosomal subunit protein eS24 (Methanothrix thermoacetophila (strain DSM 6194 / JCM 14653 / NBRC 101360 / PT) (Methanosaeta thermophila)).